We begin with the raw amino-acid sequence, 512 residues long: Transmembrane protein 102 (512 aa).

At 1–267 (MASAVWGNAP…EAWPTLCPAQ (267 aa)) the chain is on the extracellular side. Residues 168–258 (PVPGGRDWIH…PGPQPSEARE (91 aa)) form a disordered region. 2 stretches are compositionally biased toward basic and acidic residues: residues 174–186 (DWIHPTDSREGPR) and 195–209 (PHSDIIEPEAHESLE). Residues 210-226 (KSPSNVSVPESPQQNLT) show a composition bias toward polar residues. The helical transmembrane segment at 268–284 (VAAWFFASLAAVAESLF) threads the bilayer. At 285 to 512 (PVPGAPRLVH…GLAGVGAGSH (228 aa)) the chain is on the cytoplasmic side.

In terms of assembly, interacts with CSF2RB; this interaction occurs preferentially in the absence of CSF2.

It localises to the cell membrane. Selectively involved in CSF2 deprivation-induced apoptosis via a mitochondria-dependent pathway. This Bos taurus (Bovine) protein is Transmembrane protein 102 (TMEM102).